Here is a 307-residue protein sequence, read N- to C-terminus: Nicotinamide/nicotinic acid mononucleotide adenylyltransferase 2 (307 aa).

Residues Ser16 and Phe17 each contribute to the NAD(+) site. His24 contributes to the ATP binding site. NAD(+) is bound by residues Trp92 and Thr95. 2 S-palmitoyl cysteine lipidation sites follow: Cys164 and Cys165. Gly200, Asp202, Leu212, Trp213, and Arg232 together coordinate NAD(+). Residue 271–274 (TKSR) coordinates ATP.

The protein belongs to the eukaryotic NMN adenylyltransferase family. In terms of assembly, monomer. Mg(2+) serves as cofactor. Degraded in response to injured neurite. Degradation is caused by polyubiquitination by MYCBP2 after recognition by FBXO45. Post-translationally, palmitoylated; palmitoylation is required for membrane association.

The protein resides in the golgi apparatus membrane. Its subcellular location is the cytoplasmic vesicle membrane. The protein localises to the cytoplasm. It localises to the cell projection. It is found in the axon. It catalyses the reaction beta-nicotinamide D-ribonucleotide + ATP + H(+) = diphosphate + NAD(+). It carries out the reaction nicotinate beta-D-ribonucleotide + ATP + H(+) = deamido-NAD(+) + diphosphate. Its pathway is cofactor biosynthesis; NAD(+) biosynthesis; NAD(+) from nicotinamide D-ribonucleotide: step 1/1. It participates in cofactor biosynthesis; NAD(+) biosynthesis; deamido-NAD(+) from nicotinate D-ribonucleotide: step 1/1. Inhibited by P1-(adenosine-5')-P3-(nicotinamide-riboside-5')-triphosphate (Np3AD) and P1-(adenosine-5')-P4-(nicotinamide-riboside-5')-tetraphosphate (Np4AD). Functionally, nicotinamide/nicotinate-nucleotide adenylyltransferase that acts as an axon maintenance factor. Axon survival factor required for the maintenance of healthy axons: acts by delaying Wallerian axon degeneration, an evolutionarily conserved process that drives the loss of damaged axons. Catalyzes the formation of NAD(+) from nicotinamide mononucleotide (NMN) and ATP. Can also use the deamidated form; nicotinic acid mononucleotide (NaMN) as substrate but with a lower efficiency. Cannot use triazofurin monophosphate (TrMP) as substrate. Also catalyzes the reverse reaction, i.e. the pyrophosphorolytic cleavage of NAD(+). For the pyrophosphorolytic activity prefers NAD(+), NADH and NaAD as substrates and degrades nicotinic acid adenine dinucleotide phosphate (NHD) less effectively. Fails to cleave phosphorylated dinucleotides NADP(+), NADPH and NaADP(+). Also acts as an activator of ADP-ribosylation by supporting the catalytic activity of PARP16 and promoting mono-ADP-ribosylation of ribosomes by PARP16. May be involved in the maintenance of axonal integrity. This Pongo abelii (Sumatran orangutan) protein is Nicotinamide/nicotinic acid mononucleotide adenylyltransferase 2 (NMNAT2).